The primary structure comprises 442 residues: Methionine aminopeptidase 2 (442 aa).

The disordered stretch occupies residues 1–81 (MAAQAPTEAL…APTAQSDPPR (81 aa)). The segment covering 56-72 (PLRRRRRRRRTRKKKKA) has biased composition (basic residues). His-196 serves as a coordination point for substrate. The a divalent metal cation site is built by Asp-216, Asp-227, and His-296. His-304 contributes to the substrate binding site. A divalent metal cation is bound by residues Glu-329 and Glu-423.

This sequence belongs to the peptidase M24A family. Methionine aminopeptidase eukaryotic type 2 subfamily. The cofactor is Co(2+). Zn(2+) serves as cofactor. Mn(2+) is required as a cofactor. Requires Fe(2+) as cofactor.

The protein resides in the cytoplasm. It carries out the reaction Release of N-terminal amino acids, preferentially methionine, from peptides and arylamides.. In terms of biological role, cotranslationally removes the N-terminal methionine from nascent proteins. The N-terminal methionine is often cleaved when the second residue in the primary sequence is small and uncharged (Met-Ala-, Cys, Gly, Pro, Ser, Thr, or Val). The chain is Methionine aminopeptidase 2 from Verticillium alfalfae (strain VaMs.102 / ATCC MYA-4576 / FGSC 10136) (Verticillium wilt of alfalfa).